Reading from the N-terminus, the 82-residue chain is uncharacterized protein (82 aa).

2 consecutive transmembrane segments (helical) span residues leucine 29–isoleucine 49 and tryptophan 55–phenylalanine 75.

The protein localises to the cell membrane. This is an uncharacterized protein from Escherichia coli (strain K12).